Reading from the N-terminus, the 303-residue chain is Dihydroorotate dehydrogenase B (NAD(+)), catalytic subunit (303 aa).

Substrate contacts are provided by residues Lys46, 70–74 (NAIGL), and Asn124. 46–47 (KS) is an FMN binding site. Asn124 provides a ligand contact to FMN. Cys127 acts as the Nucleophile in catalysis. FMN contacts are provided by Lys163 and Ile189. A substrate-binding site is contributed by 190-191 (NS). FMN contacts are provided by residues Gly216, 242–243 (GG), and 264–265 (GT).

Belongs to the dihydroorotate dehydrogenase family. Type 1 subfamily. In terms of assembly, heterotetramer of 2 PyrK and 2 PyrD type B subunits. The cofactor is FMN.

It localises to the cytoplasm. The enzyme catalyses (S)-dihydroorotate + NAD(+) = orotate + NADH + H(+). It participates in pyrimidine metabolism; UMP biosynthesis via de novo pathway; orotate from (S)-dihydroorotate (NAD(+) route): step 1/1. Its function is as follows. Catalyzes the conversion of dihydroorotate to orotate with NAD(+) as electron acceptor. The chain is Dihydroorotate dehydrogenase B (NAD(+)), catalytic subunit (pyrD) from Methanothermobacter thermautotrophicus (strain ATCC 29096 / DSM 1053 / JCM 10044 / NBRC 100330 / Delta H) (Methanobacterium thermoautotrophicum).